Here is a 71-residue protein sequence, read N- to C-terminus: Translation initiation factor IF-1 (71 aa).

In terms of domain architecture, S1-like spans 1–71 (MAKDAIKLRA…TKGRITYRHK (71 aa)).

Belongs to the IF-1 family. Component of the 30S ribosomal translation pre-initiation complex which assembles on the 30S ribosome in the order IF-2 and IF-3, IF-1 and N-formylmethionyl-tRNA(fMet); mRNA recruitment can occur at any time during PIC assembly.

It localises to the cytoplasm. Functionally, one of the essential components for the initiation of protein synthesis. Stabilizes the binding of IF-2 and IF-3 on the 30S subunit to which N-formylmethionyl-tRNA(fMet) subsequently binds. Helps modulate mRNA selection, yielding the 30S pre-initiation complex (PIC). Upon addition of the 50S ribosomal subunit IF-1, IF-2 and IF-3 are released leaving the mature 70S translation initiation complex. This is Translation initiation factor IF-1 from Mycoplasmopsis synoviae (strain 53) (Mycoplasma synoviae).